We begin with the raw amino-acid sequence, 162 residues long: Caveolin-2 (162 aa).

The Cytoplasmic portion of the chain corresponds to Met-1–Lys-86. Position 19 is a phosphotyrosine; by SRC (Tyr-19). 2 positions are modified to phosphoserine: Ser-20 and Ser-23. Tyr-27 carries the post-translational modification Phosphotyrosine; by SRC. Phosphoserine is present on Ser-36. The segment at residues Phe-87 to Leu-107 is an intramembrane region (helical). The Cytoplasmic segment spans residues Ser-108–Asp-162.

It belongs to the caveolin family. Monomer or homodimer. Interacts with CAV1; the interaction forms a stable heterooligomeric complex that is required for targeting to lipid rafts and for caveolae formation. Tyrosine phosphorylated forms do not form heterooligomers with the Tyr-19-phosphorylated form existing as a monomer or dimer, and the Tyr-27-form as a monomer only. Interacts (tyrosine phosphorylated form) with the SH2 domain-containing proteins, RASA1, NCK1 and SRC. Interacts (tyrosine phosphorylated form) with INSR, the interaction (Tyr-27-phosphorylated form) is increased on insulin stimulation. Interacts (Tyr-19 phosphorylated form) with MAPK1 (phosphorylated form); the interaction, promoted by insulin, leads to nuclear location and MAPK1 activation. Interacts with STAT3; the interaction is increased on insulin-induced tyrosine phosphorylation leading to STAT activation. Post-translationally, phosphorylated on serine and tyrosine residues. CAV1 promotes phosphorylation on Ser-23 which then targets the complex to the plasma membrane, lipid rafts and caveolae. Phosphorylation on Ser-36 appears to modulate mitosis in endothelial cells. Phosphorylation on both Tyr-19 and Tyr-27 is required for insulin-induced 'Ser-727' phosphorylation of STAT3 and its activation. Phosphorylation on Tyr-19 is required for insulin-induced phosphorylation of MAPK1 and DNA binding of STAT3. Tyrosine phosphorylation is induced by both EGF and insulin (By. similarity).

The protein localises to the nucleus. It localises to the cytoplasm. It is found in the golgi apparatus membrane. The protein resides in the cell membrane. Its subcellular location is the membrane. The protein localises to the caveola. May act as a scaffolding protein within caveolar membranes. Interacts directly with G-protein alpha subunits and can functionally regulate their activity. Acts as an accessory protein in conjunction with CAV1 in targeting to lipid rafts and driving caveolae formation. The Ser-36 phosphorylated form has a role in modulating mitosis in endothelial cells. Positive regulator of cellular mitogenesis of the MAPK signaling pathway. Required for the insulin-stimulated nuclear translocation and activation of MAPK1 and STAT3, and the subsequent regulation of cell cycle progression. In Chlorocebus aethiops (Green monkey), this protein is Caveolin-2 (CAV2).